Consider the following 392-residue polypeptide: Chorismate synthase (392 aa).

NADP(+) contacts are provided by R40 and R46. FMN contacts are provided by residues R129–S131, Q257–A258, G302, K317–T321, and R343.

This sequence belongs to the chorismate synthase family. As to quaternary structure, homotetramer. It depends on FMNH2 as a cofactor.

It catalyses the reaction 5-O-(1-carboxyvinyl)-3-phosphoshikimate = chorismate + phosphate. The protein operates within metabolic intermediate biosynthesis; chorismate biosynthesis; chorismate from D-erythrose 4-phosphate and phosphoenolpyruvate: step 7/7. In terms of biological role, catalyzes the anti-1,4-elimination of the C-3 phosphate and the C-6 proR hydrogen from 5-enolpyruvylshikimate-3-phosphate (EPSP) to yield chorismate, which is the branch point compound that serves as the starting substrate for the three terminal pathways of aromatic amino acid biosynthesis. This reaction introduces a second double bond into the aromatic ring system. The protein is Chorismate synthase of Chloroherpeton thalassium (strain ATCC 35110 / GB-78).